Consider the following 233-residue polypeptide: Synaptogyrin-4 (233 aa).

The region spanning 18–169 (FLRRPKSISR…QAYLAFQDLR (152 aa)) is the MARVEL domain. The next 4 helical transmembrane spans lie at 25 to 45 (ISRI…LTDG), 66 to 86 (CSFA…FLAI), 104 to 124 (LLDF…FCFL), and 145 to 165 (AAIA…YLAF). The interval 191-233 (SPSSTSPSNPPITGPNSLSYTSSALSPYMTTPKAPRLAMMPDS) is disordered. A compositionally biased stretch (polar residues) spans 204–219 (GPNSLSYTSSALSPYM).

The protein belongs to the synaptogyrin family.

Its subcellular location is the membrane. The protein is Synaptogyrin-4 (Syngr4) of Mus musculus (Mouse).